The primary structure comprises 247 residues: Cell division protein ZapD (247 aa).

Belongs to the ZapD family. Interacts with FtsZ.

It is found in the cytoplasm. Functionally, cell division factor that enhances FtsZ-ring assembly. Directly interacts with FtsZ and promotes bundling of FtsZ protofilaments, with a reduction in FtsZ GTPase activity. This chain is Cell division protein ZapD, found in Shigella sonnei (strain Ss046).